The sequence spans 206 residues: Probable chemoreceptor glutamine deamidase CheD (206 aa).

Belongs to the CheD family.

The enzyme catalyses L-glutaminyl-[protein] + H2O = L-glutamyl-[protein] + NH4(+). Probably deamidates glutamine residues to glutamate on methyl-accepting chemotaxis receptors (MCPs), playing an important role in chemotaxis. The chain is Probable chemoreceptor glutamine deamidase CheD from Laribacter hongkongensis (strain HLHK9).